Here is a 158-residue protein sequence, read N- to C-terminus: Ribosome maturation factor RimP (158 aa).

This sequence belongs to the RimP family.

It is found in the cytoplasm. Functionally, required for maturation of 30S ribosomal subunits. The sequence is that of Ribosome maturation factor RimP from Streptococcus suis (strain 98HAH33).